The chain runs to 234 residues: Leucyl/phenylalanyl-tRNA--protein transferase (234 aa).

Belongs to the L/F-transferase family.

It localises to the cytoplasm. It catalyses the reaction N-terminal L-lysyl-[protein] + L-leucyl-tRNA(Leu) = N-terminal L-leucyl-L-lysyl-[protein] + tRNA(Leu) + H(+). The enzyme catalyses N-terminal L-arginyl-[protein] + L-leucyl-tRNA(Leu) = N-terminal L-leucyl-L-arginyl-[protein] + tRNA(Leu) + H(+). The catalysed reaction is L-phenylalanyl-tRNA(Phe) + an N-terminal L-alpha-aminoacyl-[protein] = an N-terminal L-phenylalanyl-L-alpha-aminoacyl-[protein] + tRNA(Phe). In terms of biological role, functions in the N-end rule pathway of protein degradation where it conjugates Leu, Phe and, less efficiently, Met from aminoacyl-tRNAs to the N-termini of proteins containing an N-terminal arginine or lysine. The chain is Leucyl/phenylalanyl-tRNA--protein transferase from Pseudoalteromonas atlantica (strain T6c / ATCC BAA-1087).